The chain runs to 132 residues: Small ribosomal subunit protein uS8 (132 aa).

It belongs to the universal ribosomal protein uS8 family. In terms of assembly, part of the 30S ribosomal subunit. Contacts proteins S5 and S12.

One of the primary rRNA binding proteins, it binds directly to 16S rRNA central domain where it helps coordinate assembly of the platform of the 30S subunit. This chain is Small ribosomal subunit protein uS8, found in Bradyrhizobium sp. (strain ORS 278).